Consider the following 4660-residue polypeptide: Low-density lipoprotein receptor-related protein 2 (4660 aa).

Positions 1-25 are cleaved as a signal peptide; the sequence is MERGAAAAAWMLLLAIAACLEPVSS. The Extracellular segment spans residues 26–4425; sequence QECGSGNFRC…LSRGIPPGTT (4400 aa). LDL-receptor class A domains are found at residues 27–63, 66–104, 107–143, 141–180, 182–218, and 221–257; these read ECGS…IGCP, SCES…QNCA, TCSA…RNCH, NCHY…ANCT, LCSQ…RNCN, and TCGG…DGCE. Disulfide bonds link Cys28-Cys40, Cys35-Cys53, Cys47-Cys62, Cys67-Cys80, Cys74-Cys93, Cys87-Cys103, Cys108-Cys120, Cys115-Cys133, Cys127-Cys142, Cys142-Cys157, Cys152-Cys170, Cys164-Cys179, Cys183-Cys195, Cys190-Cys208, Cys202-Cys217, Cys222-Cys234, Cys229-Cys247, and Cys241-Cys256. Asn159 and Asn178 each carry an N-linked (GlcNAc...) asparagine glycan. Residue Asn259 is glycosylated (N-linked (GlcNAc...) asparagine). The region spanning 264–307 is the LDL-receptor class A 7 domain; it reads RCYPREWACPGSGRCISIDKVCDGVPDCPEGDDENNVTSGRTCG. Intrachain disulfides connect Cys265-Cys278, Cys272-Cys291, and Cys285-Cys306. N-linked (GlcNAc...) asparagine glycans are attached at residues Asn299 and Asn340. The EGF-like 1; calcium-binding domain maps to 347 to 382; the sequence is DFDDCQIWGICDQKCENRQGRHQCLCEEGYILERGQ. Intrachain disulfides connect Cys351-Cys361 and Cys357-Cys370. LDL-receptor class B repeat units lie at residues 435-477, 478-520, 521-567, and 568-612; these read HRVF…DWIN, NKLY…DPTV, GYLF…DLVS, and KRVY…FEEH. Residue Asn462 is glycosylated (N-linked (GlcNAc...) asparagine). The N-linked (GlcNAc...) asparagine glycan is linked to Asn657. LDL-receptor class B repeat units follow at residues 752–794, 795–836, 837–880, and 881–924; these read STVF…DWIS, RNLY…HPTA, GYMF…DWSA, and SRLY…FKDN. An N-linked (GlcNAc...) asparagine glycan is attached at Asn865. Residues 1024–1060 form the LDL-receptor class A 8 domain; it reads QCGSLSFPCNNGKCVPSFFRCDGVDDCHDNSDEHQCG. Cystine bridges form between Cys1025–Cys1037, Cys1032–Cys1050, and Cys1044–Cys1059. Asn1063 carries an N-linked (GlcNAc...) asparagine glycan. 7 LDL-receptor class A domains span residues 1065–1102, 1109–1145, 1149–1185, 1187–1224, 1230–1268, 1271–1307, and 1312–1350; these read TCSP…QNCP, TCPS…KNCQ, TCQP…AGCV, NCTS…AGCP, MCHP…TGCV, TCSP…KDCP, and HCPS…PLCN. 9 cysteine pairs are disulfide-bonded: Cys1066/Cys1079, Cys1073/Cys1092, Cys1086/Cys1101, Cys1110/Cys1122, Cys1117/Cys1135, Cys1129/Cys1144, Cys1150/Cys1162, Cys1157/Cys1175, and Cys1169/Cys1184. Residues Trp1127, Asp1130, Asp1132, Asp1134, Asp1140, and Glu1141 each coordinate Ca(2+). Asn1187 carries an N-linked (GlcNAc...) asparagine glycan. 18 disulfides stabilise this stretch: Cys1188–Cys1201, Cys1195–Cys1214, Cys1208–Cys1223, Cys1231–Cys1244, Cys1238–Cys1257, Cys1251–Cys1267, Cys1272–Cys1284, Cys1279–Cys1297, Cys1291–Cys1306, Cys1313–Cys1326, Cys1320–Cys1339, Cys1333–Cys1349, Cys1354–Cys1365, Cys1361–Cys1374, Cys1376–Cys1389, Cys1395–Cys1405, Cys1401–Cys1414, and Cys1416–Cys1429. 6 residues coordinate Ca(2+): Tyr1206, Asp1209, Val1211, Asp1213, Asp1219, and Glu1220. N-linked (GlcNAc...) asparagine glycans are attached at residues Asn1328 and Asn1341. One can recognise an EGF-like 2 domain in the interval 1350-1390; sequence NQDSCSHFNGGCTHQCMQGPFGATCLCPLGYQLANDTKTCE. N-linked (GlcNAc...) asparagine glycosylation is present at Asn1384. The EGF-like 3; calcium-binding domain maps to 1391 to 1430; it reads DINECDIPGFCSQHCVNMRGSFRCACDPEYTLESDGRTCK. Residues Asn1451, Asn1497, and Asn1551 are each glycosylated (N-linked (GlcNAc...) asparagine). LDL-receptor class B repeat units follow at residues 1479 to 1521, 1522 to 1564, 1567 to 1610, 1611 to 1655, and 1656 to 1696; these read GRVF…DWIG, RNLY…DPRM, NVMF…DYPN, RLIY…FEDF, and VYWT…IHPS. N-linked (GlcNAc...) asparagine glycans are attached at residues Asn1676, Asn1733, and Asn1811. LDL-receptor class B repeat units follow at residues 1791–1833, 1834–1883, 1884–1931, 1932–1973, 1974–2014, 2108–2157, 2158–2202, 2203–2246, and 2247–2290; these read QFIY…DWVS, RNIY…DPAR, GKLY…DIQE, QKLY…YGSF, LYYS…YHRR, GFIY…DWAA, GNLY…DPKH, RYLF…DHDT, and GYIY…FGES. Residues Asn2134, Asn2178, and Asn2225 are each glycosylated (N-linked (GlcNAc...) asparagine). Asn2396 carries N-linked (GlcNAc...) asparagine glycosylation. LDL-receptor class B repeat units lie at residues 2432-2478, 2479-2519, 2520-2563, 2564-2605, and 2606-2647; these read NRIF…DWIN, RRIY…DPCR, GYMY…DLET, DLLY…YGQY, and IYWT…VVKT. Asn2488 and Asn2548 each carry an N-linked (GlcNAc...) asparagine glycan. LDL-receptor class A domains follow at residues 2700–2738, 2741–2777, 2780–2819, 2822–2861, 2864–2902, 2907–2946, 2949–2991, 2994–3030, 3033–3071, and 3076–3112; these read RCNQ…TVCA, TCRS…AGCL, NCNS…KNCP, TCPP…IYCA, TCRS…DTCG, TCRA…HHCE, NCSS…QNCT, TCSA…RGCS, PCHA…HLCH, and TCPL…KGCG. Disulfide bonds link Cys2701–Cys2713, Cys2708–Cys2726, Cys2720–Cys2737, Cys2742–Cys2754, Cys2749–Cys2767, Cys2761–Cys2776, Cys2781–Cys2794, Cys2789–Cys2807, Cys2801–Cys2818, Cys2823–Cys2836, Cys2830–Cys2849, Cys2843–Cys2860, Cys2865–Cys2878, Cys2872–Cys2891, Cys2885–Cys2901, Cys2908–Cys2920, Cys2915–Cys2933, and Cys2927–Cys2945. N-linked (GlcNAc...) asparagine glycosylation occurs at Asn2782. N-linked (GlcNAc...) asparagine glycosylation is present at Asn2810. Asn2949 carries N-linked (GlcNAc...) asparagine glycosylation. Disulfide bonds link Cys2950/Cys2967, Cys2957/Cys2980, Cys2974/Cys2990, Cys2995/Cys3007, Cys3002/Cys3020, Cys3014/Cys3029, Cys3034/Cys3046, Cys3041/Cys3059, Cys3053/Cys3070, Cys3077/Cys3089, Cys3084/Cys3102, Cys3096/Cys3111, Cys3116/Cys3128, Cys3124/Cys3137, Cys3139/Cys3152, Cys3158/Cys3169, Cys3165/Cys3178, and Cys3180/Cys3193. N-linked (GlcNAc...) asparagine glycosylation occurs at Asn2989. The 42-residue stretch at 3112–3153 folds into the EGF-like 4 domain; that stretch reads GINECLDSSISRCDHNCTDTITSFYCSCLPGYKLMSDKRSCV. A glycan (N-linked (GlcNAc...) asparagine) is linked at Asn3127. The EGF-like 5; calcium-binding domain maps to 3154 to 3194; sequence DIDECKESPQLCSQKCENVVGSYICKCAPGYIREPDGKSCR. Residues Asn3213, Asn3259, Asn3317, and Asn3357 are each glycosylated (N-linked (GlcNAc...) asparagine). LDL-receptor class B repeat units lie at residues 3241 to 3283, 3284 to 3326, 3335 to 3378, 3379 to 3421, and 3422 to 3462; these read KRLY…DWVS, RKLY…EHPR, GHVY…DYTN, DLLY…FEDT, and VFWT…YHPY. N-linked (GlcNAc...) asparagine glycosylation is present at Asn3448. LDL-receptor class A domains follow at residues 3513 to 3551, 3554 to 3592, 3595 to 3633, 3636 to 3674, 3679 to 3717, 3720 to 3757, 3760 to 3796, and 3799 to 3835; these read MCSS…DLCP, FCRL…VLCE, RCES…SHCA, TCRP…DECT, NCDN…QGCE, PCHP…ENCV, ECSE…RDCE, and TCHP…SACP. Disulfide bonds link Cys3514–Cys3527, Cys3521–Cys3540, Cys3534–Cys3550, Cys3555–Cys3567, Cys3562–Cys3580, Cys3574–Cys3591, Cys3596–Cys3608, Cys3603–Cys3621, Cys3615–Cys3632, Cys3637–Cys3649, Cys3644–Cys3662, Cys3656–Cys3673, Cys3680–Cys3694, Cys3688–Cys3707, Cys3701–Cys3716, Cys3721–Cys3734, Cys3729–Cys3747, Cys3741–Cys3756, Cys3761–Cys3773, Cys3768–Cys3786, Cys3780–Cys3795, Cys3800–Cys3812, Cys3807–Cys3825, and Cys3819–Cys3834. A glycan (N-linked (GlcNAc...) asparagine) is linked at Asn3566. N-linked (GlcNAc...) asparagine glycosylation occurs at Asn3682. Asn3840 is a glycosylation site (N-linked (GlcNAc...) asparagine). LDL-receptor class A domains lie at 3843–3881, 3884–3923, and 3929–3965; these read YCPA…HLCF, PCES…EHCR, and PCTD…TGCN. Intrachain disulfides connect Cys3844/Cys3856, Cys3851/Cys3869, Cys3863/Cys3880, Cys3885/Cys3898, Cys3893/Cys3911, Cys3905/Cys3922, Cys3930/Cys3942, Cys3937/Cys3955, and Cys3949/Cys3964. Positions 3968-4003 constitute an EGF-like 6 domain; the sequence is DNRTCAENICEQNCTQLSSGGFICSCRPGFKPSTSD. N-linked (GlcNAc...) asparagine glycosylation is found at Asn3969 and Asn3980. 5 disulfide bridges follow: Cys3972–Cys3981, Cys3977–Cys3991, Cys4013–Cys4023, Cys4019–Cys4032, and Cys4034–Cys4049. Residues 4009-4050 enclose the EGF-like 7; calcium-binding domain; it reads DINECEEFGICPQSCRNSKGSYECFCVDGFKSMSTHYGERCA. The N-linked (GlcNAc...) asparagine glycan is linked to Asn4070. LDL-receptor class B repeat units follow at residues 4156–4198, 4199–4242, and 4244–4285; these read RHIY…NPKL, GLMF…DYLN, and DRVY…FEDK. The N-linked (GlcNAc...) asparagine glycan is linked to Asn4329. In terms of domain architecture, EGF-like 8 spans 4379 to 4413; that stretch reads MPPPCRCMHGGNCYFDENELPKCKCSSGYSGEYCE. Cystine bridges form between Cys4383–Cys4391, Cys4385–Cys4401, and Cys4403–Cys4412. Residues 4426–4446 form a helical membrane-spanning segment; sequence MAVLLTFVIVIIVGALVLVGL. The Cytoplasmic segment spans residues 4447–4660; that stretch reads FHYRKTGSLL…ANLVKEDSDV (214 aa). Residues 4454 to 4463 carry the SH3-binding motif; the sequence is SLLPTLPKLP. Residues 4457–4462 carry the PxLPxI/L motif 1; mediates interaction with ANKRA2 motif; the sequence is PTLPKL. A PxLPxI/L motif 2; mediates interaction with ANKRA2 motif is present at residues 4460 to 4465; that stretch reads PKLPSL. 2 positions are modified to phosphoserine: Ser4464 and Ser4467. Residues 4522-4527 carry the Endocytosis signal motif; that stretch reads FENPMY. The interval 4559–4582 is disordered; it reads NYGRPIDPSEIVPEPKPASPGADE. Phosphoserine is present on Ser4577. The tract at residues 4597-4610 is interaction with DAB2; the sequence is QTTNFENPIYAEMD. The NPXY motif signature appears at 4603-4606; sequence NPIY. The short motif at 4606–4609 is the SH2-binding element; that stretch reads YAEM. The segment at 4617 to 4660 is disordered; it reads VAVAPPPSPSLPAKASKRNLTPGYTATEDTFKDTANLVKEDSDV. Residues 4619-4630 carry the SH3-binding motif; sequence VAPPPSPSLPAK. The residue at position 4624 (Ser4624) is a Phosphoserine. The span at 4634-4644 shows a compositional bias: polar residues; that stretch reads RNLTPGYTATE. Thr4637 carries the post-translational modification Phosphothreonine. A Phosphoserine modification is found at Ser4658.

It belongs to the LDLR family. In terms of assembly, binds plasminogen, extracellular matrix components, plasminogen activator-plasminogen activator inhibitor type I complex, apolipoprotein E-enriched beta-VLDL, lipoprotein lipase, lactoferrin, CLU/clusterin and calcium. Forms a multimeric complex together with LRPAP1. Interacts (via PxLPxI/L motif) with ANKRA2 (via ankyrin repeats). Interacts with LRP2BP. Interacts (via NPXY motif) with DAB2; the interaction is not affected by tyrosine phosphorylation of the NPXY motif. Interacts with MB. Interacts with BMP4. Interacts with the Sonic hedgehog protein N-product which is the active product of SHH. Interacts with CST3 in a calcium-dependent manner. Interacts with the vitamin-D binding protein GC/DBP. Interacts with sex hormone-binding protein SHBG. Interacts with angiotensin-2. Also interacts with angiotensin 1-7. Interacts with APOM. Interacts with selenoprotein SEPP1. Interacts with LEP. Interacts with ALB. Interacts with the antiapoptotic protein BIRC5/survivin. Interacts with matrix metalloproteinase MMP2 in complex with metalloproteinase inhibitor TIMP1. In neurons, forms a trimeric complex with APP and APPB1/FE65. Interacts with LDLRAP1/ARH; mediates trafficking of LRP2 to the endocytic recycling compartment. Does not interact with beta-amyloid protein 40 alone but interacts with the complex composed of beta-amyloid protein 40 and CLU/APOJ. Interacts with MDK. A fraction undergoes proteolytic cleavage of the extracellular domain at the cell membrane to generate a cytoplasmic tail fragment. This is internalized into the early endosome from where it trafficks in an LDLRAP1/ARH-dependent manner to the endocytic recycling compartment (ERC). In the ERC, it is further cleaved by gamma-secretase to release a fragment which translocates to the nucleus and mediates transcriptional repression. Post-translationally, N-glycosylation is required for ligand binding. As to expression, in the inner ear, expressed in the lumen of the endolymphatic sac where it localizes to macrophage-like cells as well as to mitochondria-rich and ribosome-rich epithelial cells (at protein level). In the inner ear, expressed in marginal cells of the stria vascularis, epithelial cells at the spiral prominence, epithelial cells of Reissner's membrane facing the cochlear duct, and Kolliker's organ (at protein level). Expressed in the choroid plexus epithelium in the brain (at protein level). In the brain, also expressed in astrocytes (at protein level). Expression also detected in epithelial cells of the kidney glomerulus and proximal tubule, lung, epididymis and yolk sac.

Its subcellular location is the apical cell membrane. It localises to the endosome lumen. It is found in the membrane. The protein localises to the clathrin-coated pit. The protein resides in the cell projection. Its subcellular location is the dendrite. It localises to the axon. Multiligand endocytic receptor. Acts together with CUBN to mediate endocytosis of high-density lipoproteins. Mediates receptor-mediated uptake of polybasic drugs such as aprotinin, aminoglycosides and polymyxin B. In the kidney, mediates the tubular uptake and clearance of leptin. Also mediates transport of leptin across the blood-brain barrier through endocytosis at the choroid plexus epithelium. Endocytosis of leptin in neuronal cells is required for hypothalamic leptin signaling and leptin-mediated regulation of feeding and body weight. Mediates endocytosis and subsequent lysosomal degradation of CST3 in kidney proximal tubule cells. Mediates renal uptake of 25-hydroxyvitamin D3 in complex with the vitamin D3 transporter GC/DBP. Mediates renal uptake of metallothionein-bound heavy metals. Together with CUBN, mediates renal reabsorption of myoglobin. Mediates renal uptake and subsequent lysosomal degradation of APOM. Plays a role in kidney selenium homeostasis by mediating renal endocytosis of selenoprotein SEPP1. Mediates renal uptake of the antiapoptotic protein BIRC5/survivin which may be important for functional integrity of the kidney. Mediates renal uptake of matrix metalloproteinase MMP2 in complex with metalloproteinase inhibitor TIMP1. Mediates endocytosis of Sonic hedgehog protein N-product (ShhN), the active product of SHH. Also mediates ShhN transcytosis. In the embryonic neuroepithelium, mediates endocytic uptake and degradation of BMP4, is required for correct SHH localization in the ventral neural tube and plays a role in patterning of the ventral telencephalon. Required at the onset of neurulation to sequester SHH on the apical surface of neuroepithelial cells of the rostral diencephalon ventral midline and to control PTCH1-dependent uptake and intracellular trafficking of SHH. During neurulation, required in neuroepithelial cells for uptake of folate bound to the folate receptor FOLR1 which is necessary for neural tube closure. In the adult brain, negatively regulates BMP signaling in the subependymal zone which enables neurogenesis to proceed. In astrocytes, mediates endocytosis of ALB which is required for the synthesis of the neurotrophic factor oleic acid. Involved in neurite branching. During optic nerve development, required for SHH-mediated migration and proliferation of oligodendrocyte precursor cells. Mediates endocytic uptake and clearance of SHH in the retinal margin which protects retinal progenitor cells from mitogenic stimuli and keeps them quiescent. Plays a role in reproductive organ development by mediating uptake in reproductive tissues of androgen and estrogen bound to the sex hormone binding protein SHBG. Mediates endocytosis of angiotensin-2. Also mediates endocytosis of angiotensin 1-7. Binds to the complex composed of beta-amyloid protein 40 and CLU/APOJ and mediates its endocytosis and lysosomal degradation. Required for embryonic heart development. Required for normal hearing, possibly through interaction with estrogen in the inner ear. The protein is Low-density lipoprotein receptor-related protein 2 (Lrp2) of Rattus norvegicus (Rat).